A 421-amino-acid chain; its full sequence is AA11 family lytic polysaccharide monooxygenase (421 aa).

Positions 1–19 are cleaved as a signal peptide; sequence MFSKAFLSAALLGAAAVEG. Cu(+)-binding residues include His-20, His-79, and Glu-93. 3 disulfides stabilise this stretch: Cys-48-Cys-162, Cys-84-Cys-110, and Cys-201-Cys-235. Residue Asn-117 is glycosylated (N-linked (GlcNAc...) asparagine). A disordered region spans residues 231-349; it reads GSQACTGTPT…SSSSSSSGAL (119 aa). Over residues 247-285 the composition is skewed to low complexity; that stretch reads TAGSSGSSGSSSGSSSGGSSSSAAGSGATAPPAPAVSST. Residues 304–314 are compositionally biased toward polar residues; that stretch reads SPAQPTHTSAP. Over residues 315–349 the composition is skewed to low complexity; the sequence is SGGSSSGSGSSSGSNSGSSSGSSSSSSSSSSSGAL.

Belongs to the polysaccharide monooxygenase AA11 family. Cu(2+) is required as a cofactor.

Lytic polysaccharide monooxygenase (LPMO) that depolymerizes chitin via the oxidation of scissile beta-(1-4)-glycosidic bonds, yielding C1 or C4 oxidation products. Catalysis by LPMOs requires the reduction of the active-site copper from Cu(II) to Cu(I) by a reducing agent and H(2)O(2) or O(2) as a cosubstrate. Active on chitin but has no activity on other substrates, including diverse mannans, cellulose and starch (data not shown). Primary chain cleavage yields predominantly aldonic acid oligosaccharides with even-numbered degrees of polymerization. The sequence is that of AA11 family lytic polysaccharide monooxygenase from Aspergillus oryzae (strain ATCC 42149 / RIB 40) (Yellow koji mold).